We begin with the raw amino-acid sequence, 442 residues long: Glutamyl-tRNA reductase (442 aa).

Residues 49-52 (TCNR), serine 109, 114-116 (ESQ), and glutamine 120 contribute to the substrate site. Cysteine 50 functions as the Nucleophile in the catalytic mechanism. NADP(+) is bound at residue 189–194 (GAGAMS).

The protein belongs to the glutamyl-tRNA reductase family. Homodimer.

It carries out the reaction (S)-4-amino-5-oxopentanoate + tRNA(Glu) + NADP(+) = L-glutamyl-tRNA(Glu) + NADPH + H(+). It functions in the pathway porphyrin-containing compound metabolism; protoporphyrin-IX biosynthesis; 5-aminolevulinate from L-glutamyl-tRNA(Glu): step 1/2. Functionally, catalyzes the NADPH-dependent reduction of glutamyl-tRNA(Glu) to glutamate 1-semialdehyde (GSA). The sequence is that of Glutamyl-tRNA reductase from Kineococcus radiotolerans (strain ATCC BAA-149 / DSM 14245 / SRS30216).